A 159-amino-acid polypeptide reads, in one-letter code: Anaerobic nitrite reductase HB2 (159 aa).

In terms of domain architecture, Globin spans 2–152; sequence GFTEKQEGLV…LAEAIKAEMK (151 aa). A Homodimerization motif is present at residues 35 to 39; sequence EIAPG. Heme b-binding residues include Ser-45, Lys-59, His-63, and His-98. The Homodimerization signature appears at 105–117; the sequence is DPHFEVVKEALLR.

Belongs to the plant globin family. Homodimer. Heme b serves as cofactor.

Its subcellular location is the cytoplasm. The protein resides in the nucleus. It catalyses the reaction Fe(III)-heme b-[protein] + nitric oxide + H2O = Fe(II)-heme b-[protein] + nitrite + 2 H(+). In terms of biological role, phytoglobin that reduces nitrite to nitric oxide (NO) under anoxic conditions (e.g. during flooding or in waterlogged soil). May not function as an oxygen storage or transport protein. Has an unusually high affinity for O(2) through an hexacoordinate heme iron because of a very low dissociation constant. This chain is Anaerobic nitrite reductase HB2, found in Gossypium hirsutum (Upland cotton).